Here is a 338-residue protein sequence, read N- to C-terminus: Nicotinate-nucleotide--dimethylbenzimidazole phosphoribosyltransferase (338 aa).

Glu305 acts as the Proton acceptor in catalysis.

This sequence belongs to the CobT family.

It catalyses the reaction 5,6-dimethylbenzimidazole + nicotinate beta-D-ribonucleotide = alpha-ribazole 5'-phosphate + nicotinate + H(+). Its pathway is nucleoside biosynthesis; alpha-ribazole biosynthesis; alpha-ribazole from 5,6-dimethylbenzimidazole: step 1/2. Functionally, catalyzes the synthesis of alpha-ribazole-5'-phosphate from nicotinate mononucleotide (NAMN) and 5,6-dimethylbenzimidazole (DMB). This Rhizobium etli (strain CIAT 652) protein is Nicotinate-nucleotide--dimethylbenzimidazole phosphoribosyltransferase.